A 352-amino-acid chain; its full sequence is Small glutamine-rich tetratricopeptide repeat-containing protein 2 (352 aa).

A compositionally biased stretch (low complexity) spans 80–97; it reads PAAASSSSTAPAAAAATP. Positions 80–103 are disordered; sequence PAAASSSSTAPAAAAATPSDEDLA. TPR repeat units lie at residues 105–138, 140–172, and 173–206; these read AEQL…NPNS, VYFS…DPKF, and GKAY…DPSN. A disordered region spans residues 217 to 236; that stretch reads KEQLSSSSSSNANDATASRG.

The protein belongs to the SGT family.

In terms of biological role, co-chaperone that binds to the molecular chaperone Hsp70 and regulates Hsp70 ATPase activity. The polypeptide is Small glutamine-rich tetratricopeptide repeat-containing protein 2 (Mycosarcoma maydis (Corn smut fungus)).